A 508-amino-acid polypeptide reads, in one-letter code: Photosystem II CP47 reaction center protein (508 aa).

A run of 6 helical transmembrane segments spans residues 21 to 36 (SVHI…WAGS), 101 to 115 (IVFS…IWHW), 140 to 156 (GIHL…FGAF), 203 to 218 (IAAG…FHLS), 237 to 252 (VLSS…AFVV), and 457 to 472 (SFAL…HGAR).

The protein belongs to the PsbB/PsbC family. PsbB subfamily. PSII is composed of 1 copy each of membrane proteins PsbA, PsbB, PsbC, PsbD, PsbE, PsbF, PsbH, PsbI, PsbJ, PsbK, PsbL, PsbM, PsbT, PsbX, PsbY, PsbZ, Psb30/Ycf12, at least 3 peripheral proteins of the oxygen-evolving complex and a large number of cofactors. It forms dimeric complexes. It depends on Binds multiple chlorophylls. PSII binds additional chlorophylls, carotenoids and specific lipids. as a cofactor.

It localises to the plastid. The protein resides in the chloroplast thylakoid membrane. In terms of biological role, one of the components of the core complex of photosystem II (PSII). It binds chlorophyll and helps catalyze the primary light-induced photochemical processes of PSII. PSII is a light-driven water:plastoquinone oxidoreductase, using light energy to abstract electrons from H(2)O, generating O(2) and a proton gradient subsequently used for ATP formation. This Acorus calamus var. americanus (American sweet flag) protein is Photosystem II CP47 reaction center protein.